A 147-amino-acid chain; its full sequence is Hemoglobin subunit beta (147 aa).

N-acetylvaline is present on valine 2. The 145-residue stretch at 3–147 (HLTGDEKAAV…VANALAHKYH (145 aa)) folds into the Globin domain. Phosphothreonine is present on threonine 13. At serine 45 the chain carries Phosphoserine. Lysine 60 is modified (N6-acetyllysine). Histidine 64 is a binding site for heme b. Residue lysine 83 is modified to N6-acetyllysine. A heme b-binding site is contributed by histidine 93. Cysteine 94 bears the S-nitrosocysteine mark. An N6-acetyllysine modification is found at lysine 145.

Belongs to the globin family. In terms of assembly, heterotetramer of two alpha chains and two beta chains. As to expression, red blood cells.

Involved in oxygen transport from the lung to the various peripheral tissues. The chain is Hemoglobin subunit beta (HBB) from Alouatta belzebul (Red-handed howler monkey).